Here is a 1130-residue protein sequence, read N- to C-terminus: Putative beta-hexosaminidase (1130 aa).

The signal sequence occupies residues 1–23 (MKWVKSGVGILGILLIICHAVTS). Composition is skewed to low complexity over residues 1001 to 1030 (PGQM…LPAQ) and 1037 to 1072 (LTGQ…QRTG). Disordered regions lie at residues 1001–1075 (PGQM…GVVP) and 1102–1130 (QMRG…QQAG).

This sequence belongs to the glycosyl hydrolase 20 family. Prismatic layer of shell (at protein level). Expressed primarily in the mantle with highest level in the mantle edge and lower level in the mantle pallium.

The protein resides in the secreted. It catalyses the reaction Hydrolysis of terminal non-reducing N-acetyl-D-hexosamine residues in N-acetyl-beta-D-hexosaminides.. It participates in glycan degradation; chitin degradation. This Pinctada maxima (Silver-lipped pearl oyster) protein is Putative beta-hexosaminidase.